The following is a 359-amino-acid chain: Nicotinate-nucleotide--dimethylbenzimidazole phosphoribosyltransferase (359 aa).

The active-site Proton acceptor is E318.

Belongs to the CobT family. As to quaternary structure, homodimer.

It carries out the reaction 5,6-dimethylbenzimidazole + nicotinate beta-D-ribonucleotide = alpha-ribazole 5'-phosphate + nicotinate + H(+). Its pathway is nucleoside biosynthesis; alpha-ribazole biosynthesis; alpha-ribazole from 5,6-dimethylbenzimidazole: step 1/2. Its function is as follows. Catalyzes the synthesis of alpha-ribazole-5'-phosphate from nicotinate mononucleotide (NAMN) and 5,6-dimethylbenzimidazole (DMB). The chain is Nicotinate-nucleotide--dimethylbenzimidazole phosphoribosyltransferase from Escherichia coli O8 (strain IAI1).